The following is a 136-amino-acid chain: Small ribosomal subunit protein uS11c (136 aa).

Residues 1-22 are disordered; sequence MAKAIPKKGSRGRIGSRKSTRK.

Belongs to the universal ribosomal protein uS11 family. Part of the 30S ribosomal subunit.

It localises to the plastid. The protein localises to the chloroplast. The polypeptide is Small ribosomal subunit protein uS11c (Lactuca sativa (Garden lettuce)).